The chain runs to 377 residues: Queuine tRNA-ribosyltransferase (377 aa).

The Proton acceptor role is filled by Asp89. Substrate is bound by residues 89–93 (DSGGF), Asp143, Gln188, and Gly215. The RNA binding stretch occupies residues 246–252 (GVGKPED). Asp265 (nucleophile) is an active-site residue. Positions 270-274 (TRNAR) are RNA binding; important for wobble base 34 recognition. Zn(2+) is bound by residues Cys303, Cys305, Cys308, and His334.

The protein belongs to the queuine tRNA-ribosyltransferase family. As to quaternary structure, homodimer. Within each dimer, one monomer is responsible for RNA recognition and catalysis, while the other monomer binds to the replacement base PreQ1. It depends on Zn(2+) as a cofactor.

It catalyses the reaction 7-aminomethyl-7-carbaguanine + guanosine(34) in tRNA = 7-aminomethyl-7-carbaguanosine(34) in tRNA + guanine. Its pathway is tRNA modification; tRNA-queuosine biosynthesis. Catalyzes the base-exchange of a guanine (G) residue with the queuine precursor 7-aminomethyl-7-deazaguanine (PreQ1) at position 34 (anticodon wobble position) in tRNAs with GU(N) anticodons (tRNA-Asp, -Asn, -His and -Tyr). Catalysis occurs through a double-displacement mechanism. The nucleophile active site attacks the C1' of nucleotide 34 to detach the guanine base from the RNA, forming a covalent enzyme-RNA intermediate. The proton acceptor active site deprotonates the incoming PreQ1, allowing a nucleophilic attack on the C1' of the ribose to form the product. After dissociation, two additional enzymatic reactions on the tRNA convert PreQ1 to queuine (Q), resulting in the hypermodified nucleoside queuosine (7-(((4,5-cis-dihydroxy-2-cyclopenten-1-yl)amino)methyl)-7-deazaguanosine). The protein is Queuine tRNA-ribosyltransferase of Acinetobacter baumannii (strain SDF).